The primary structure comprises 369 residues: Flagellar P-ring protein (369 aa).

The N-terminal stretch at 1–22 (MFNARRLIAATLLMSCAFGAHA) is a signal peptide.

The protein belongs to the FlgI family. As to quaternary structure, the basal body constitutes a major portion of the flagellar organelle and consists of four rings (L,P,S, and M) mounted on a central rod.

The protein localises to the periplasm. It is found in the bacterial flagellum basal body. Its function is as follows. Assembles around the rod to form the L-ring and probably protects the motor/basal body from shearing forces during rotation. This is Flagellar P-ring protein from Pseudomonas entomophila (strain L48).